A 244-amino-acid polypeptide reads, in one-letter code: 2-C-methyl-D-erythritol 4-phosphate cytidylyltransferase (244 aa).

It belongs to the IspD/TarI cytidylyltransferase family. IspD subfamily.

The enzyme catalyses 2-C-methyl-D-erythritol 4-phosphate + CTP + H(+) = 4-CDP-2-C-methyl-D-erythritol + diphosphate. The protein operates within isoprenoid biosynthesis; isopentenyl diphosphate biosynthesis via DXP pathway; isopentenyl diphosphate from 1-deoxy-D-xylulose 5-phosphate: step 2/6. Functionally, catalyzes the formation of 4-diphosphocytidyl-2-C-methyl-D-erythritol from CTP and 2-C-methyl-D-erythritol 4-phosphate (MEP). The protein is 2-C-methyl-D-erythritol 4-phosphate cytidylyltransferase of Solibacter usitatus (strain Ellin6076).